Reading from the N-terminus, the 49-residue chain is uncharacterized protein (49 aa).

This is an uncharacterized protein from Bacillus subtilis (strain 168).